A 466-amino-acid polypeptide reads, in one-letter code: tRNA(Ile)-lysidine synthase (466 aa).

26 to 31 is a binding site for ATP; the sequence is SGGSDS.

The protein belongs to the tRNA(Ile)-lysidine synthase family.

It is found in the cytoplasm. It carries out the reaction cytidine(34) in tRNA(Ile2) + L-lysine + ATP = lysidine(34) in tRNA(Ile2) + AMP + diphosphate + H(+). In terms of biological role, ligates lysine onto the cytidine present at position 34 of the AUA codon-specific tRNA(Ile) that contains the anticodon CAU, in an ATP-dependent manner. Cytidine is converted to lysidine, thus changing the amino acid specificity of the tRNA from methionine to isoleucine. The chain is tRNA(Ile)-lysidine synthase from Oceanobacillus iheyensis (strain DSM 14371 / CIP 107618 / JCM 11309 / KCTC 3954 / HTE831).